Here is a 264-residue protein sequence, read N- to C-terminus: Chanoclavine-I dehydrogenase easD (264 aa).

The first 20 residues, 1–20 (MASVSSKIFAITGGASGIGA), serve as a signal peptide directing secretion. The NADP(+) site is built by Ile-18, Asp-66, Arg-132, Tyr-169, Lys-173, and Thr-204. Tyr-169 functions as the Proton donor in the catalytic mechanism. The active-site Lowers pKa of active site Tyr is the Lys-173.

It belongs to the short-chain dehydrogenases/reductases (SDR) family. As to quaternary structure, homotetramer.

The catalysed reaction is chanoclavine-I + NAD(+) = chanoclavine-I aldehyde + NADH + H(+). Its pathway is alkaloid biosynthesis; ergot alkaloid biosynthesis. Its function is as follows. Chanoclavine-I dehydrogenase; part of the gene cluster that mediates the biosynthesis of fungal ergot alkaloid. DmaW catalyzes the first step of ergot alkaloid biosynthesis by condensing dimethylallyl diphosphate (DMAP) and tryptophan to form 4-dimethylallyl-L-tryptophan. The second step is catalyzed by the methyltransferase easF that methylates 4-dimethylallyl-L-tryptophan in the presence of S-adenosyl-L-methionine, resulting in the formation of 4-dimethylallyl-L-abrine. The catalase easC and the FAD-dependent oxidoreductase easE then transform 4-dimethylallyl-L-abrine to chanoclavine-I which is further oxidized by easD in the presence of NAD(+), resulting in the formation of chanoclavine-I aldehyde. Chanoclavine-I aldehyde is the precursor of ergoamides and ergopeptines in Clavicipitaceae, and clavine-type alcaloids such as fumiclavine in Trichocomaceae. However, the metabolites downstream of chanoclavine-I aldehyde in Arthrodermataceae have not been identified yet. This is Chanoclavine-I dehydrogenase easD from Arthroderma otae (strain ATCC MYA-4605 / CBS 113480) (Microsporum canis).